A 518-amino-acid polypeptide reads, in one-letter code: Sensor protein kinase HptS (518 aa).

The next 2 helical transmembrane spans lie at 20 to 40 (IFPVFLVIIIGLVSFYAIYIW) and 222 to 242 (GITLLIVMAVVLVLLVIFGFI). The region spanning 297 to 513 (EQLIHSIEHT…LICYKIPLSR (217 aa)) is the Histidine kinase domain. Phosphohistidine; by autocatalysis is present on histidine 325.

Autophosphorylated.

Its subcellular location is the cell membrane. The enzyme catalyses ATP + protein L-histidine = ADP + protein N-phospho-L-histidine.. Its function is as follows. Member of the two-component regulatory system HptS/HptR that regulates genes involved in hexose phosphate transport system in response to changes in extracellular phosphate sources. May act as a sensor protein kinase which is autophosphorylated at a histidine residue and transfers its phosphate group to the conserved aspartic acid residue in the regulatory domain of HptS. In turn, HptS antagonizes CcpA-dependent transcription of a subset of CcpA-regulated genes involved in antibiotic susceptibility. This is Sensor protein kinase HptS (hptS) from Staphylococcus aureus (strain Mu50 / ATCC 700699).